The chain runs to 218 residues: Dynein axonemal assembly factor 6 (218 aa).

Residues 66 to 103 form a disordered region; it reads MGPGNIGPPKAKESKAIPEPRSDESENIWNPEEVPEGA. The segment covering 75–89 has biased composition (basic and acidic residues); it reads KAKESKAIPEPRSDE.

Belongs to the PIH1 family. Interacts with HSPA1A/B, HSP90AA1 and DNAI2. Interacts with DNAAF2 and DNAAF4. As to expression, specifically expressed in testis. Detected in pachytene spermatocytes from 5 weeks of age and in pachytene and diplotene spermatocytes of adult mice. Not detected in spermatids or mature sperm.

The protein resides in the cytoplasm. The protein localises to the golgi apparatus. It localises to the trans-Golgi network. Functionally, plays a role in cytoplasmic pre-assembly of axonemal dynein. The chain is Dynein axonemal assembly factor 6 from Mus musculus (Mouse).